A 495-amino-acid chain; its full sequence is D-hydantoinase/dihydropyrimidinase (495 aa).

Zn(2+) is bound by residues His59, His61, and Lys150. Lys150 is modified (N6-carboxylysine). Tyr155 lines the substrate pocket. Zn(2+) is bound by residues His183 and His239. Ser289 serves as a coordination point for substrate. Asp316 serves as a coordination point for Zn(2+). Residue Asn337 coordinates substrate.

Belongs to the metallo-dependent hydrolases superfamily. Hydantoinase/dihydropyrimidinase family. In terms of assembly, homotetramer. Zn(2+) is required as a cofactor. In terms of processing, carboxylation allows a single lysine to coordinate two zinc ions.

It catalyses the reaction 5,6-dihydrouracil + H2O = 3-(carbamoylamino)propanoate + H(+). In terms of biological role, catalyzes the hydrolysis of dihydropyrimidines and of the structurally related DL-5-mono-substituted hydantoins, to produce N-carbamoyl-D-amino acids. The protein is D-hydantoinase/dihydropyrimidinase of Pseudomonas putida (Arthrobacter siderocapsulatus).